We begin with the raw amino-acid sequence, 198 residues long: Recombination protein RecR (198 aa).

The segment at C58 to C73 adopts a C4-type zinc-finger fold. The 95-residue stretch at S81–P175 folds into the Toprim domain.

It belongs to the RecR family.

In terms of biological role, may play a role in DNA repair. It seems to be involved in an RecBC-independent recombinational process of DNA repair. It may act with RecF and RecO. The chain is Recombination protein RecR from Clostridium botulinum (strain Alaska E43 / Type E3).